A 199-amino-acid polypeptide reads, in one-letter code: 7-methyl-GTP pyrophosphatase (199 aa).

The active-site Proton acceptor is the aspartate 76.

Belongs to the Maf family. YceF subfamily. Requires a divalent metal cation as cofactor.

It localises to the cytoplasm. It carries out the reaction N(7)-methyl-GTP + H2O = N(7)-methyl-GMP + diphosphate + H(+). Functionally, nucleoside triphosphate pyrophosphatase that hydrolyzes 7-methyl-GTP (m(7)GTP). May have a dual role in cell division arrest and in preventing the incorporation of modified nucleotides into cellular nucleic acids. The protein is 7-methyl-GTP pyrophosphatase (maf-2) of Brucella suis biovar 1 (strain 1330).